We begin with the raw amino-acid sequence, 354 residues long: DNA polymerase IV (354 aa).

One can recognise a UmuC domain in the interval 8 to 189; sequence IIHIDMDCFY…LPLQKIPGVG (182 aa). Mg(2+) is bound by residues aspartate 12 and aspartate 107. Glutamate 108 is a catalytic residue.

It belongs to the DNA polymerase type-Y family. In terms of assembly, monomer. Mg(2+) is required as a cofactor.

The protein localises to the cytoplasm. The enzyme catalyses DNA(n) + a 2'-deoxyribonucleoside 5'-triphosphate = DNA(n+1) + diphosphate. In terms of biological role, poorly processive, error-prone DNA polymerase involved in untargeted mutagenesis. Copies undamaged DNA at stalled replication forks, which arise in vivo from mismatched or misaligned primer ends. These misaligned primers can be extended by PolIV. Exhibits no 3'-5' exonuclease (proofreading) activity. May be involved in translesional synthesis, in conjunction with the beta clamp from PolIII. The polypeptide is DNA polymerase IV (Vibrio vulnificus (strain CMCP6)).